The following is a 101-amino-acid chain: uncharacterized protein (101 aa).

Residues 13–33 (FISIMCLFSIPLCFSLSIFFF) traverse the membrane as a helical segment.

Its subcellular location is the membrane. This is an uncharacterized protein from Schizosaccharomyces pombe (strain 972 / ATCC 24843) (Fission yeast).